Consider the following 63-residue polypeptide: Cytochrome c oxidase subunit 7C, mitochondrial (63 aa).

The N-terminal 16 residues, 1–16 (MLGHSIRRFTTSVVRR), are a transit peptide targeting the mitochondrion. The Mitochondrial matrix segment spans residues 17-33 (SHYEEGPGKNLPFSVKN). The residue at position 25 (lysine 25) is an N6-acetyllysine; alternate. Lysine 25 bears the N6-succinyllysine; alternate mark. The chain crosses the membrane as a helical span at residues 34–60 (KWALLVKMSLYFGSAFATPFLIVRHQL). The Mitochondrial intermembrane portion of the chain corresponds to 61-63 (LKQ).

It belongs to the cytochrome c oxidase VIIc family. Component of the cytochrome c oxidase (complex IV, CIV), a multisubunit enzyme composed of 14 subunits. The complex is composed of a catalytic core of 3 subunits MT-CO1, MT-CO2 and MT-CO3, encoded in the mitochondrial DNA, and 11 supernumerary subunits COX4I, COX5A, COX5B, COX6A, COX6B, COX6C, COX7A, COX7B, COX7C, COX8 and NDUFA4, which are encoded in the nuclear genome. The complex exists as a monomer or a dimer and forms supercomplexes (SCs) in the inner mitochondrial membrane with NADH-ubiquinone oxidoreductase (complex I, CI) and ubiquinol-cytochrome c oxidoreductase (cytochrome b-c1 complex, complex III, CIII), resulting in different assemblies (supercomplex SCI(1)III(2)IV(1) and megacomplex MCI(2)III(2)IV(2)). Interacts with RAB5IF.

The protein resides in the mitochondrion inner membrane. Its pathway is energy metabolism; oxidative phosphorylation. Its function is as follows. Component of the cytochrome c oxidase, the last enzyme in the mitochondrial electron transport chain which drives oxidative phosphorylation. The respiratory chain contains 3 multisubunit complexes succinate dehydrogenase (complex II, CII), ubiquinol-cytochrome c oxidoreductase (cytochrome b-c1 complex, complex III, CIII) and cytochrome c oxidase (complex IV, CIV), that cooperate to transfer electrons derived from NADH and succinate to molecular oxygen, creating an electrochemical gradient over the inner membrane that drives transmembrane transport and the ATP synthase. Cytochrome c oxidase is the component of the respiratory chain that catalyzes the reduction of oxygen to water. Electrons originating from reduced cytochrome c in the intermembrane space (IMS) are transferred via the dinuclear copper A center (CU(A)) of subunit 2 and heme A of subunit 1 to the active site in subunit 1, a binuclear center (BNC) formed by heme A3 and copper B (CU(B)). The BNC reduces molecular oxygen to 2 water molecules using 4 electrons from cytochrome c in the IMS and 4 protons from the mitochondrial matrix. This Papio hamadryas (Hamadryas baboon) protein is Cytochrome c oxidase subunit 7C, mitochondrial (COX7C).